Here is a 152-residue protein sequence, read N- to C-terminus: Acidic phospholipase A2 S17-58 (152 aa).

A signal peptide spans 1–19; sequence MYPAHLLVLLAVCVSLLGA. A propeptide spanning residues 20 to 27 is cleaved from the precursor; it reads SNIPLPSL. Intrachain disulfides connect cysteine 38-cysteine 104, cysteine 54-cysteine 151, cysteine 56-cysteine 72, cysteine 71-cysteine 132, cysteine 78-cysteine 125, cysteine 88-cysteine 118, and cysteine 111-cysteine 123. Residues tyrosine 55, glycine 57, and glycine 59 each contribute to the Ca(2+) site. Histidine 75 is a catalytic residue. Aspartate 76 contributes to the Ca(2+) binding site. Residue aspartate 126 is part of the active site.

It belongs to the phospholipase A2 family. Group I subfamily. D49 sub-subfamily. The cofactor is Ca(2+). As to expression, expressed by the venom gland.

It localises to the secreted. The catalysed reaction is a 1,2-diacyl-sn-glycero-3-phosphocholine + H2O = a 1-acyl-sn-glycero-3-phosphocholine + a fatty acid + H(+). Snake venom phospholipase A2 (PLA2) that inhibits collagen-induced platelet aggregation. PLA2 catalyzes the calcium-dependent hydrolysis of the 2-acyl groups in 3-sn-phosphoglycerides. The polypeptide is Acidic phospholipase A2 S17-58 (Austrelaps superbus (Lowland copperhead snake)).